The sequence spans 439 residues: Kinesin-like protein KIN-13 (439 aa).

Residue 1 to 5 coordinates ATP; it reads GSGKS. The 240-residue stretch at 1-240 folds into the Kinesin motor domain; sequence GSGKSFTMMH…LRYADRVKEL (240 aa).

Belongs to the TRAFAC class myosin-kinesin ATPase superfamily. Kinesin family. KIN-13 subfamily. As to quaternary structure, interacts with PLK. Post-translationally, phosphorylated by PLK.

Its subcellular location is the cytoplasm. The protein resides in the cytoskeleton. It localises to the cell projection. It is found in the cilium. The protein localises to the flagellum. Its subcellular location is the flagellum basal body. The protein resides in the flagellum axoneme. It localises to the spindle. It is found in the chromosome. The protein localises to the centromere. Its subcellular location is the kinetochore. Involved in cell cycle. Involved in formation of flagella, regulation of flagellar length, and formation of median bodies during interphase. Regulates flagellar length in all eight distal flagellar tips by promoting disassembly of the microtubules. Disassembles microtubules at the distal flagellar tips in a length-dependent manner in order to maintain different equilibrium lengths of the four flagellar pairs. Regulates interphase and mitotic microtubule dynamics. Regulates microtubule disassembly dynamics of the dual mitotic spindles and the median body. The polypeptide is Kinesin-like protein KIN-13 (Giardia intestinalis (Giardia lamblia)).